A 310-amino-acid chain; its full sequence is Cytosolic Fe-S cluster assembly factor Nubp1 homolog (310 aa).

The [4Fe-4S] cluster site is built by cysteine 9, cysteine 23, cysteine 26, and cysteine 32. 63 to 70 (GKGGVGKS) is a binding site for ATP. 2 residues coordinate [4Fe-4S] cluster: cysteine 240 and cysteine 243.

Belongs to the Mrp/NBP35 ATP-binding proteins family. NUBP1/NBP35 subfamily. As to quaternary structure, heterotetramer of 2 Nubp1 and 2 Nubp2 chains. [4Fe-4S] cluster is required as a cofactor.

Its subcellular location is the cytoplasm. Component of the cytosolic iron-sulfur (Fe/S) protein assembly (CIA) machinery. Required for maturation of extramitochondrial Fe-S proteins. The Nubp1-Nubp2 heterotetramer forms a Fe-S scaffold complex, mediating the de novo assembly of an Fe-S cluster and its transfer to target apoproteins. This Drosophila mojavensis (Fruit fly) protein is Cytosolic Fe-S cluster assembly factor Nubp1 homolog.